The primary structure comprises 1269 residues: DNA-directed RNA polymerase subunit beta (1269 aa).

This sequence belongs to the RNA polymerase beta chain family. In terms of assembly, the RNAP catalytic core consists of 2 alpha, 1 beta, 1 beta' and 1 omega subunit. When a sigma factor is associated with the core the holoenzyme is formed, which can initiate transcription.

The enzyme catalyses RNA(n) + a ribonucleoside 5'-triphosphate = RNA(n+1) + diphosphate. In terms of biological role, DNA-dependent RNA polymerase catalyzes the transcription of DNA into RNA using the four ribonucleoside triphosphates as substrates. The chain is DNA-directed RNA polymerase subunit beta from Porphyromonas gingivalis (strain ATCC 33277 / DSM 20709 / CIP 103683 / JCM 12257 / NCTC 11834 / 2561).